A 277-amino-acid chain; its full sequence is Caspase-3 (277 aa).

The residue at position 1 (methionine 1) is an N-acetylmethionine. Propeptides lie at residues 1 to 9 and 10 to 28; these read MENTENSVD and SKSIKNSEPKIIHGSKSVD. Over residues 1–10 the composition is skewed to polar residues; it reads MENTENSVDS. Residues 1-25 form a disordered region; it reads MENTENSVDSKSIKNSEPKIIHGSK. An N6-acetyllysine modification is found at lysine 11. Basic and acidic residues predominate over residues 11 to 20; sequence KSIKNSEPKI. Serine 26 is modified (phosphoserine). Residues histidine 121 and cysteine 163 contribute to the active site. An S-nitrosocysteine; in inhibited form modification is found at cysteine 163.

It belongs to the peptidase C14A family. As to quaternary structure, heterotetramer that consists of two anti-parallel arranged heterodimers, each one formed by a 17 kDa (p17) and a 12 kDa (p12) subunit. Interacts with BIRC6/bruce. Cleavage by granzyme B, caspase-6, caspase-8 and caspase-10 generates the two active subunits. Additional processing of the propeptides is likely due to the autocatalytic activity of the activated protease. Active heterodimers between the small subunit of caspase-7 protease and the large subunit of caspase-3 also occur and vice versa. Post-translationally, S-nitrosylated on its catalytic site cysteine in unstimulated cell lines and denitrosylated upon activation of the Fas apoptotic pathway, associated with an increase in intracellular caspase activity. Fas therefore activates caspase-3 not only by inducing the cleavage of the caspase zymogen to its active subunits, but also by stimulating the denitrosylation of its active site thiol. In terms of processing, ubiquitinated by BIRC6; this activity is inhibited by DIABLO/SMAC.

It is found in the cytoplasm. The enzyme catalyses Strict requirement for an Asp residue at positions P1 and P4. It has a preferred cleavage sequence of Asp-Xaa-Xaa-Asp-|- with a hydrophobic amino-acid residue at P2 and a hydrophilic amino-acid residue at P3, although Val or Ala are also accepted at this position.. With respect to regulation, inhibited by BIRC6; following inhibition of BIRC6-caspase binding by DIABLO/SMAC, BIRC6 is subjected to caspase cleavage, leading to an increase in active caspases. Its function is as follows. Involved in the activation cascade of caspases responsible for apoptosis execution. At the onset of apoptosis, it proteolytically cleaves poly(ADP-ribose) polymerase PARP1 at a '216-Asp-|-Gly-217' bond. Cleaves and activates sterol regulatory element binding proteins (SREBPs) between the basic helix-loop-helix leucine zipper domain and the membrane attachment domain. Cleaves and activates caspase-6, -7 and -9 (CASP6, CASP7 and CASP9, respectively). Cleaves and inactivates interleukin-18 (IL18). Triggers cell adhesion in sympathetic neurons through RET cleavage. Cleaves IL-1 beta between an Asp and an Ala, releasing the mature cytokine which is involved in a variety of inflammatory processes. Cleaves and inhibits serine/threonine-protein kinase AKT1 in response to oxidative stress. Acts as an inhibitor of type I interferon production during virus-induced apoptosis by mediating cleavage of antiviral proteins CGAS, IRF3 and MAVS, thereby preventing cytokine overproduction. Also involved in pyroptosis by mediating cleavage and activation of gasdermin-E (GSDME). Cleaves XRCC4 and phospholipid scramblase proteins XKR4, XKR8 and XKR9, leading to promote phosphatidylserine exposure on apoptotic cell surface. Cleaves BIRC6 following inhibition of BIRC6-caspase binding by DIABLO/SMAC. The sequence is that of Caspase-3 (CASP3) from Saimiri boliviensis boliviensis (Bolivian squirrel monkey).